Consider the following 574-residue polypeptide: Proline--tRNA ligase (574 aa).

The protein belongs to the class-II aminoacyl-tRNA synthetase family. ProS type 1 subfamily. Homodimer.

It is found in the cytoplasm. The enzyme catalyses tRNA(Pro) + L-proline + ATP = L-prolyl-tRNA(Pro) + AMP + diphosphate. Its function is as follows. Catalyzes the attachment of proline to tRNA(Pro) in a two-step reaction: proline is first activated by ATP to form Pro-AMP and then transferred to the acceptor end of tRNA(Pro). As ProRS can inadvertently accommodate and process non-cognate amino acids such as alanine and cysteine, to avoid such errors it has two additional distinct editing activities against alanine. One activity is designated as 'pretransfer' editing and involves the tRNA(Pro)-independent hydrolysis of activated Ala-AMP. The other activity is designated 'posttransfer' editing and involves deacylation of mischarged Ala-tRNA(Pro). The misacylated Cys-tRNA(Pro) is not edited by ProRS. This chain is Proline--tRNA ligase, found in Thioalkalivibrio sulfidiphilus (strain HL-EbGR7).